A 195-amino-acid polypeptide reads, in one-letter code: Protein GrpE (195 aa).

This sequence belongs to the GrpE family. In terms of assembly, homodimer.

The protein resides in the cytoplasm. Participates actively in the response to hyperosmotic and heat shock by preventing the aggregation of stress-denatured proteins, in association with DnaK and GrpE. It is the nucleotide exchange factor for DnaK and may function as a thermosensor. Unfolded proteins bind initially to DnaJ; upon interaction with the DnaJ-bound protein, DnaK hydrolyzes its bound ATP, resulting in the formation of a stable complex. GrpE releases ADP from DnaK; ATP binding to DnaK triggers the release of the substrate protein, thus completing the reaction cycle. Several rounds of ATP-dependent interactions between DnaJ, DnaK and GrpE are required for fully efficient folding. This chain is Protein GrpE, found in Blochmanniella floridana.